Consider the following 339-residue polypeptide: Ketol-acid reductoisomerase (NADP(+)) (339 aa).

The 182-residue stretch at methionine 1–threonine 182 folds into the KARI N-terminal Rossmann domain. Residues tyrosine 24–glutamine 27, arginine 48, serine 51, threonine 53, and aspartate 83–glutamine 86 contribute to the NADP(+) site. Histidine 108 is an active-site residue. Residue glycine 134 participates in NADP(+) binding. One can recognise a KARI C-terminal knotted domain in the interval asparagine 183–isoleucine 328. Aspartate 191, glutamate 195, glutamate 227, and glutamate 231 together coordinate Mg(2+). Substrate is bound at residue serine 252.

This sequence belongs to the ketol-acid reductoisomerase family. It depends on Mg(2+) as a cofactor.

It catalyses the reaction (2R)-2,3-dihydroxy-3-methylbutanoate + NADP(+) = (2S)-2-acetolactate + NADPH + H(+). The enzyme catalyses (2R,3R)-2,3-dihydroxy-3-methylpentanoate + NADP(+) = (S)-2-ethyl-2-hydroxy-3-oxobutanoate + NADPH + H(+). The protein operates within amino-acid biosynthesis; L-isoleucine biosynthesis; L-isoleucine from 2-oxobutanoate: step 2/4. Its pathway is amino-acid biosynthesis; L-valine biosynthesis; L-valine from pyruvate: step 2/4. Its function is as follows. Involved in the biosynthesis of branched-chain amino acids (BCAA). Catalyzes an alkyl-migration followed by a ketol-acid reduction of (S)-2-acetolactate (S2AL) to yield (R)-2,3-dihydroxy-isovalerate. In the isomerase reaction, S2AL is rearranged via a Mg-dependent methyl migration to produce 3-hydroxy-3-methyl-2-ketobutyrate (HMKB). In the reductase reaction, this 2-ketoacid undergoes a metal-dependent reduction by NADPH to yield (R)-2,3-dihydroxy-isovalerate. This Caulobacter vibrioides (strain ATCC 19089 / CIP 103742 / CB 15) (Caulobacter crescentus) protein is Ketol-acid reductoisomerase (NADP(+)).